The sequence spans 472 residues: Glutamate--tRNA ligase (472 aa).

The 'HIGH' region motif lies at 9–19 (PSPTGPLHIGS). A 'KMSKS' region motif is present at residues 237-241 (KLSKR). ATP is bound at residue Lys240.

Belongs to the class-I aminoacyl-tRNA synthetase family. Glutamate--tRNA ligase type 1 subfamily. As to quaternary structure, monomer.

It localises to the cytoplasm. It catalyses the reaction tRNA(Glu) + L-glutamate + ATP = L-glutamyl-tRNA(Glu) + AMP + diphosphate. In terms of biological role, catalyzes the attachment of glutamate to tRNA(Glu) in a two-step reaction: glutamate is first activated by ATP to form Glu-AMP and then transferred to the acceptor end of tRNA(Glu). This is Glutamate--tRNA ligase from Buchnera aphidicola subsp. Baizongia pistaciae (strain Bp).